Consider the following 600-residue polypeptide: Probable tripeptidyl-peptidase SED4 (600 aa).

The signal sequence occupies residues 1–22; sequence MVSFTLRAIGACLIGLPALITA. Positions 23 to 202 are cleaved as a propeptide — removed in mature form; it reads APTSHVSNGF…SVFTSDLEMT (180 aa). N210 and N281 each carry an N-linked (GlcNAc...) asparagine glycan. Positions 212–600 constitute a Peptidase S53 domain; sequence TITPDCIREL…FEKLSKLVLI (389 aa). Catalysis depends on charge relay system residues E288 and D292. N323 and N404 each carry an N-linked (GlcNAc...) asparagine glycan. The active-site Charge relay system is S504. 4 residues coordinate Ca(2+): D546, I547, G579, and D581.

Requires Ca(2+) as cofactor.

The protein resides in the secreted. The protein localises to the extracellular space. The enzyme catalyses Release of an N-terminal tripeptide from a polypeptide.. Functionally, secreted tripeptidyl-peptidase which degrades proteins at acidic pHs and is involved in virulence. The polypeptide is Probable tripeptidyl-peptidase SED4 (SED4) (Trichophyton verrucosum (strain HKI 0517)).